Consider the following 770-residue polypeptide: Low-density lipoprotein receptor-related protein 3 (770 aa).

The first 36 residues, 1-36 (MEKRAAAGPEGAPGARAPLAVVCLVNLFLTGRLSSA), serve as a signal peptide directing secretion. Over 37-496 (VPALAACSGK…HGCLAAVPRK (460 aa)) the chain is Extracellular. 9 disulfide bridges follow: C43–C72, C99–C120, C166–C178, C173–C191, C185–C200, C212–C227, C219–C240, C234–C249, and C254–C282. In terms of domain architecture, CUB 1 spans 43–159 (CSGKLEQHTE…QGFRLSYIRG (117 aa)). Residue N71 is glycosylated (N-linked (GlcNAc...) asparagine). LDL-receptor class A domains follow at residues 165-201 (SCQT…GNCS) and 211-250 (LCPG…AGCP). N199 is a glycosylation site (N-linked (GlcNAc...) asparagine). Residues 254–365 (CGRRLGSFYG…HGFNATYQVK (112 aa)) enclose the CUB 2 domain. N-linked (GlcNAc...) asparagine glycosylation occurs at N359. 2 LDL-receptor class A domains span residues 415-453 (ACPP…KNCF) and 454-490 (SCQP…HGCL). Cystine bridges form between C416–C430, C423–C443, C437–C452, C455–C467, C462–C480, and C474–C489. The helical transmembrane segment at 497-517 (VITAALIGSLVCGLLLVIALG) threads the bilayer. Residues 518-770 (CAFKLYSLRT…ASDDEALLVC (253 aa)) lie on the Cytoplasmic side of the membrane. Positions 639 to 753 (LLQAAPGPVP…PLGVCRSPPP (115 aa)) are disordered. The span at 689 to 703 (RDPEYRPEDKERKAC) shows a compositional bias: basic and acidic residues.

This sequence belongs to the LDLR family. In terms of assembly, binds GGA1 and GGA2.

It localises to the membrane. The protein resides in the coated pit. Its function is as follows. Probable receptor, which may be involved in the internalization of lipophilic molecules and/or signal transduction. Its precise role is however unclear, since it does not bind to very low density lipoprotein (VLDL) or to LRPAP1 in vitro. This chain is Low-density lipoprotein receptor-related protein 3 (Lrp3), found in Rattus norvegicus (Rat).